A 244-amino-acid polypeptide reads, in one-letter code: NAD reductase coq12 (244 aa).

The segment at 131-158 (NPLMNSEKNSTSVEDLPGSNRTQQTSSH) is disordered. Over residues 132 to 158 (PLMNSEKNSTSVEDLPGSNRTQQTSSH) the composition is skewed to polar residues.

The protein resides in the mitochondrion. The catalysed reaction is a reduced flavin + NAD(+) = an oxidized flavin + NADH + 2 H(+). NADH-dependent flavin reductase that acts in the coenzyme Q biosynthetic pathway. Required for synthesis of the p-hydroxybenzoic acid (PHB) precursor to form a quinone backbone. In Schizosaccharomyces pombe (strain 972 / ATCC 24843) (Fission yeast), this protein is NAD reductase coq12.